The primary structure comprises 427 residues: Gamma-glutamyl phosphate reductase (427 aa).

Belongs to the gamma-glutamyl phosphate reductase family.

The protein resides in the cytoplasm. The catalysed reaction is L-glutamate 5-semialdehyde + phosphate + NADP(+) = L-glutamyl 5-phosphate + NADPH + H(+). The protein operates within amino-acid biosynthesis; L-proline biosynthesis; L-glutamate 5-semialdehyde from L-glutamate: step 2/2. Its function is as follows. Catalyzes the NADPH-dependent reduction of L-glutamate 5-phosphate into L-glutamate 5-semialdehyde and phosphate. The product spontaneously undergoes cyclization to form 1-pyrroline-5-carboxylate. This Rhizobium etli (strain ATCC 51251 / DSM 11541 / JCM 21823 / NBRC 15573 / CFN 42) protein is Gamma-glutamyl phosphate reductase.